Reading from the N-terminus, the 199-residue chain is 7-methyl-GTP pyrophosphatase (199 aa).

The active-site Proton acceptor is aspartate 76.

Belongs to the Maf family. YceF subfamily. The cofactor is a divalent metal cation.

Its subcellular location is the cytoplasm. The catalysed reaction is N(7)-methyl-GTP + H2O = N(7)-methyl-GMP + diphosphate + H(+). Functionally, nucleoside triphosphate pyrophosphatase that hydrolyzes 7-methyl-GTP (m(7)GTP). May have a dual role in cell division arrest and in preventing the incorporation of modified nucleotides into cellular nucleic acids. The chain is 7-methyl-GTP pyrophosphatase from Nitrosococcus oceani (strain ATCC 19707 / BCRC 17464 / JCM 30415 / NCIMB 11848 / C-107).